Here is a 246-residue protein sequence, read N- to C-terminus: Peptide methionine sulfoxide reductase (246 aa).

The active-site Cysteine sulfenic acid (-SOH) intermediate is Cys48. A disulfide bridge links Cys48 with Cys246.

Conjugated to URM1, a ubiquitin-like protein.

The enzyme catalyses L-methionyl-[protein] + [thioredoxin]-disulfide + H2O = L-methionyl-(S)-S-oxide-[protein] + [thioredoxin]-dithiol. It catalyses the reaction [thioredoxin]-disulfide + L-methionine + H2O = L-methionine (S)-S-oxide + [thioredoxin]-dithiol. Has an important function as a repair enzyme for proteins that have been inactivated by oxidation. Catalyzes the reduction of methionine sulfoxide in proteins to methionine. Does not catalyze the reverse reaction involving the oxidation of methionine residues. The sequence is that of Peptide methionine sulfoxide reductase from Drosophila melanogaster (Fruit fly).